Reading from the N-terminus, the 175-residue chain is ATP synthase subunit d, mitochondrial (175 aa).

Residue serine 2 is modified to N-acetylserine.

F-type ATP synthases have 2 components, the catalytic core F(1) and the membrane-embedded component F(0), linked together by a central stalk and a peripheral stalk. The central stalk, also called rotor shaft, is often seen as part of F(1). The peripheral stalk is seen as part of F(0). F(0) contains the membrane channel next to the rotor. F-type ATP synthases form dimers but each monomer functions independently in ATP generation. The dimer consists of 18 different polypeptides: ATP1 (subunit alpha, part of F(1), 3 molecules per monomer), ATP2 (subunit beta, part of F(1), 3 molecules per monomer), ATP3 (subunit gamma, part of the central stalk), ATP4 (subunit b, part of the peripheral stalk), ATP5/OSCP (subunit 5/OSCP, part of the peripheral stalk), ATP6 (subunit a, part of the peripheral stalk), ATP7 (subunit d, part of the peripheral stalk), ATP8 (subunit 8, part of the peripheral stalk), OLI1 (subunit c, part of the rotor, 10 molecules per monomer), ATP14 (subunit h, part of the peripheral stalk), ATP15 (subunit epsilon, part of the central stalk), ATP16 (subunit delta, part of the central stalk), ATP17 (subunit f, part of the peripheral stalk), ATP18 (subunit i/j, part of the peripheral stalk). Dimer-specific subunits are ATP19 (subunit k, at interface between monomers), ATP20 (subunit g, at interface between monomers), TIM11 (subunit e, at interface between monomers). Also contains subunit L.

The protein localises to the mitochondrion inner membrane. In terms of biological role, mitochondrial membrane ATP synthase (F(1)F(0) ATP synthase or Complex V) produces ATP from ADP in the presence of a proton gradient across the membrane which is generated by electron transport complexes of the respiratory chain. F-type ATP synthases consist of two structural domains, F(1) - containing the extramembraneous catalytic core, and F(0) - containing the membrane proton channel, linked together by a central stalk and a peripheral stalk. During catalysis, ATP synthesis in the catalytic domain of F(1) is coupled via a rotary mechanism of the central stalk subunits to proton translocation. Part of the complex F(0) domain and the peripheral stalk, which acts as a stator to hold the catalytic alpha/ATP1(3)beta/ATP2(3) subcomplex and subunit a/ATP6 static relative to the rotary elements. The polypeptide is ATP synthase subunit d, mitochondrial (Pichia angusta (Yeast)).